Reading from the N-terminus, the 585-residue chain is Serine protease HtrA-like (585 aa).

The segment at 1–184 is disordered; it reads MDNNKKQVIP…QPKDKDNDNT (184 aa). The span at 21-82 shows a compositional bias: basic and acidic residues; it reads YFHNVEREER…IHQQRDDKSY (62 aa). The segment covering 84 to 94 has biased composition (polar residues); sequence QKTLNQNNQMN. The segment covering 95-113 has biased composition (basic and acidic residues); that stretch reads KSKDDDNKIGEESLHDVRV. A compositionally biased stretch (polar residues) spans 114–124; it reads SSDTSTLPHQN. The segment covering 126–139 has biased composition (basic and acidic residues); the sequence is SIKDYDDSGNESKQ. Residues 151 to 175 are compositionally biased toward polar residues; the sequence is GVNSNHTEQDSRSTQPYSSKHSYSQ. The helical transmembrane segment at 224–244 threads the bilayer; sequence MLIIIGIIVLLLILNAIFTTV. Catalysis depends on charge relay system residues histidine 320, aspartate 350, and serine 435. One can recognise a PDZ domain in the interval 516–575; the sequence is GVLIGEVKENGLGDKAGLKKGDVIVELDGKKIEDNLRYRQVIYSHYDDQKTITAKIYRNG.

Belongs to the peptidase S1C family.

The protein resides in the cell membrane. In Staphylococcus epidermidis (strain ATCC 35984 / DSM 28319 / BCRC 17069 / CCUG 31568 / BM 3577 / RP62A), this protein is Serine protease HtrA-like.